The primary structure comprises 644 residues: Exoribonuclease 2 (644 aa).

Residues 189-516 (REDLTALDFV…NHRLLKAVIK (328 aa)) form the RNB domain. The region spanning 561–643 (DTRFAAEIVD…ETRSIIARPV (83 aa)) is the S1 motif domain.

It belongs to the RNR ribonuclease family. RNase II subfamily.

The protein localises to the cytoplasm. The enzyme catalyses Exonucleolytic cleavage in the 3'- to 5'-direction to yield nucleoside 5'-phosphates.. In terms of biological role, involved in mRNA degradation. Hydrolyzes single-stranded polyribonucleotides processively in the 3' to 5' direction. This chain is Exoribonuclease 2, found in Escherichia coli (strain UTI89 / UPEC).